The chain runs to 355 residues: Lipopolysaccharide heptosyltransferase 1 (355 aa).

ADP-L-glycero-beta-D-manno-heptose-binding residues include Thr186, Thr187, Lys191, Glu221, Asp260, Thr261, Gly262, and His265.

It belongs to the glycosyltransferase 9 family.

It is found in the cell inner membrane. It carries out the reaction an alpha-Kdo-(2-&gt;4)-alpha-Kdo-(2-&gt;6)-lipid A + ADP-L-glycero-beta-D-manno-heptose = an L-alpha-D-Hep-(1-&gt;5)-[alpha-Kdo-(2-&gt;4)]-alpha-Kdo-(2-&gt;6)-lipid A + ADP + H(+). The protein operates within bacterial outer membrane biogenesis; LPS core biosynthesis. In terms of biological role, glycosyltransferase involved in the biosynthesis of the core oligosaccharide region of lipopolysaccharide (LPS). Catalyzes the addition of the first heptose unit to one 3-deoxy-D-manno-octulosonic acid (Kdo) residue of the Kdo2-lipid A module. The polypeptide is Lipopolysaccharide heptosyltransferase 1 (Pseudomonas aeruginosa (strain ATCC 15692 / DSM 22644 / CIP 104116 / JCM 14847 / LMG 12228 / 1C / PRS 101 / PAO1)).